The following is a 232-amino-acid chain: Ribosomal RNA small subunit methyltransferase G (232 aa).

S-adenosyl-L-methionine is bound by residues G93, L98, 144 to 145 (VE), and R163.

Belongs to the methyltransferase superfamily. RNA methyltransferase RsmG family.

The protein resides in the cytoplasm. It catalyses the reaction guanosine(527) in 16S rRNA + S-adenosyl-L-methionine = N(7)-methylguanosine(527) in 16S rRNA + S-adenosyl-L-homocysteine. Specifically methylates the N7 position of guanine in position 527 of 16S rRNA. This is Ribosomal RNA small subunit methyltransferase G from Burkholderia pseudomallei (strain 668).